The following is a 175-amino-acid chain: Zinc metalloproteinase-disintegrin-like catroriarin (175 aa).

Positions 1 to 63 (NPCCDAATCK…ECPADVFHKN (63 aa)) constitute a Disintegrin domain. Intrachain disulfides connect cysteine 3/cysteine 26, cysteine 17/cysteine 23, cysteine 22/cysteine 48, cysteine 35/cysteine 55, cysteine 42/cysteine 74, cysteine 67/cysteine 79, cysteine 101/cysteine 147, cysteine 114/cysteine 124, and cysteine 131/cysteine 171. The D/ECD-tripeptide motif lies at 41 to 43 (ECD). Ca(2+) contacts are provided by aspartate 43, proline 44, glutamate 46, aspartate 58, and valine 59.

The protein belongs to the venom metalloproteinase (M12B) family. P-III subfamily. P-IIIa sub-subfamily. As to quaternary structure, monomer. Zn(2+) is required as a cofactor. In terms of processing, glycosylated. In terms of tissue distribution, expressed by the venom gland.

The protein localises to the secreted. Snake venom metalloproteinase that impairs hemostasis in the envenomed animal. The protein is Zinc metalloproteinase-disintegrin-like catroriarin of Crotalus atrox (Western diamondback rattlesnake).